A 504-amino-acid chain; its full sequence is Dihydrolipoamide dehydrogenase (504 aa).

Residues 1–34 constitute a mitochondrion transit peptide; that stretch reads MLSQRLIGRTAVKSAFRPSGLPTVVNASRWRRGY. Residues 69-78, Lys-87, Gly-151, and 180-182 contribute to the FAD site; these read EKRGTLGGTC and TGS. Cysteines 78 and 83 form a disulfide. NAD(+)-binding positions include 217–224, Glu-240, Val-275, and Gly-310; that span reads GGGIIGLE. FAD contacts are provided by residues Asp-351 and 357-360; that span reads MLAH. The active-site Proton acceptor is the His-483.

This sequence belongs to the class-I pyridine nucleotide-disulfide oxidoreductase family. Eukaryotic pyruvate dehydrogenase (PDH) complexes are organized as a core consisting of the oligomeric dihydrolipoamide acetyl-transferase (E2), around which are arranged multiple copies of pyruvate dehydrogenase (E1), dihydrolipoamide dehydrogenase (E3) and protein X (E3BP) bound by non-covalent bonds. The Chaetomium thermophilum PDH complex contains 60 E2 units, 12 E3BP units, about 20 E1 units, and 12 or more E3 units. The units are organized in 1 E2 60-mer, 4 E3BP trimers, about 20 E1 tetramers, and a maximum of 12 E3 dimers. The E3BP trimers are bound inside the icosahedral core with tetrahedral symmetry. Requires FAD as cofactor.

It localises to the mitochondrion. The enzyme catalyses N(6)-[(R)-dihydrolipoyl]-L-lysyl-[protein] + NAD(+) = N(6)-[(R)-lipoyl]-L-lysyl-[protein] + NADH + H(+). Its function is as follows. Lipoamide dehydrogenase is a component of the alpha-ketoacid dehydrogenase complexes. This includes the pyruvate dehydrogenase complex, which catalyzes the overall conversion of pyruvate to acetyl-CoA and CO(2). Also acts as a component of the glycine cleavage system (glycine decarboxylase complex), which catalyzes the degradation of glycine. The 10-megadalton pyruvate dehydrogenase complex contains multiple copies of three enzymatic components: pyruvate dehydrogenase (E1), dihydrolipoamide acetyltransferase (E2) and lipoamide dehydrogenase (E3) and catalyzes the overall oxidative decarboxylation of pyruvate to form acetyl-CoA and CO(2). Within the complex, pyruvate and thiamine pyrophosphate (TPP or vitamin B1) are bound by pyruvate dehydrogenase E1 subunits alpha and beta and pyruvate is decarboxylated leading to the 2-carbon hydrohyethyl bound to TPP. The E2 component contains covalently-bound lipoyl cofactors and transfers the hydroxyethyl group from TPP to an oxidized form of covalently bound lipoamide, and the resulting acetyl group is then transferred to free coenzyme A to form acetyl-CoA and reduced dihydrolipoamide-E2. Finally, the flavoprotein dihydrolipoamide dehydrogenase (E3) re-oxidizes the lipoyl group of dihydrolipoamide-E2 to form lipoamide-E2 and NADH. A fourth subunit, E3BP, is responsible for tethering E3 in proximity to the core, forming the entire metabolon. The chain is Dihydrolipoamide dehydrogenase from Chaetomium thermophilum (strain DSM 1495 / CBS 144.50 / IMI 039719) (Thermochaetoides thermophila).